Consider the following 234-residue polypeptide: 2,3-bisphosphoglycerate-dependent phosphoglycerate mutase (234 aa).

Substrate contacts are provided by residues 10–17 (RHGSSIWN), 23–24 (TG), R62, 89–92 (ERHY), K100, 116–117 (RR), and 186–187 (GN). The active-site Tele-phosphohistidine intermediate is H11. E89 functions as the Proton donor/acceptor in the catalytic mechanism.

Belongs to the phosphoglycerate mutase family. BPG-dependent PGAM subfamily. In terms of assembly, homodimer.

The catalysed reaction is (2R)-2-phosphoglycerate = (2R)-3-phosphoglycerate. Its pathway is carbohydrate degradation; glycolysis; pyruvate from D-glyceraldehyde 3-phosphate: step 3/5. In terms of biological role, catalyzes the interconversion of 2-phosphoglycerate and 3-phosphoglycerate. The chain is 2,3-bisphosphoglycerate-dependent phosphoglycerate mutase from Wigglesworthia glossinidia brevipalpis.